Here is a 245-residue protein sequence, read N- to C-terminus: 1-(5-phosphoribosyl)-5-[(5-phosphoribosylamino)methylideneamino] imidazole-4-carboxamide isomerase (245 aa).

The active-site Proton acceptor is D7. D129 acts as the Proton donor in catalysis.

It belongs to the HisA/HisF family.

It is found in the cytoplasm. It carries out the reaction 1-(5-phospho-beta-D-ribosyl)-5-[(5-phospho-beta-D-ribosylamino)methylideneamino]imidazole-4-carboxamide = 5-[(5-phospho-1-deoxy-D-ribulos-1-ylimino)methylamino]-1-(5-phospho-beta-D-ribosyl)imidazole-4-carboxamide. Its pathway is amino-acid biosynthesis; L-histidine biosynthesis; L-histidine from 5-phospho-alpha-D-ribose 1-diphosphate: step 4/9. The protein is 1-(5-phosphoribosyl)-5-[(5-phosphoribosylamino)methylideneamino] imidazole-4-carboxamide isomerase of Salmonella dublin (strain CT_02021853).